Here is a 118-residue protein sequence, read N- to C-terminus: Basic phospholipase A2 nigroxin B (118 aa).

Disulfide bonds link Cys11–Cys70, Cys25–Cys117, Cys27–Cys43, Cys42–Cys98, Cys49–Cys91, Cys59–Cys84, and Cys77–Cys89. The Ca(2+) site is built by Tyr26, Gly28, and Gly30. The active site involves His46. Asp47 contributes to the Ca(2+) binding site. Asp92 is an active-site residue.

The protein belongs to the phospholipase A2 family. Group I subfamily. D49 sub-subfamily. Ca(2+) serves as cofactor. In terms of tissue distribution, expressed by the venom gland.

The protein resides in the secreted. It catalyses the reaction a 1,2-diacyl-sn-glycero-3-phosphocholine + H2O = a 1-acyl-sn-glycero-3-phosphocholine + a fatty acid + H(+). Its function is as follows. Snake venom phospholipase A2 (PLA2) that has only a weak enzymatic activity. It has a myotoxic activity in vivo (dystrophic effect). PLA2 catalyzes the calcium-dependent hydrolysis of the 2-acyl groups in 3-sn-phosphoglycerides. The polypeptide is Basic phospholipase A2 nigroxin B (Micrurus nigrocinctus (Central American coral snake)).